The primary structure comprises 476 residues: Glycogen synthase (476 aa).

K15 is a binding site for ADP-alpha-D-glucose.

This sequence belongs to the glycosyltransferase 1 family. Bacterial/plant glycogen synthase subfamily.

It carries out the reaction [(1-&gt;4)-alpha-D-glucosyl](n) + ADP-alpha-D-glucose = [(1-&gt;4)-alpha-D-glucosyl](n+1) + ADP + H(+). Its pathway is glycan biosynthesis; glycogen biosynthesis. Functionally, synthesizes alpha-1,4-glucan chains using ADP-glucose. This chain is Glycogen synthase, found in Bacillus cereus (strain ZK / E33L).